An 899-amino-acid chain; its full sequence is Bifunctional uridylyltransferase/uridylyl-removing enzyme (899 aa).

Residues Met-1–Val-347 form a uridylyltransferase region. The uridylyl-removing stretch occupies residues Leu-348–Val-718. The 117-residue stretch at Val-465–Val-581 folds into the HD domain. ACT domains follow at residues Gln-719–Arg-804 and Val-827–Cys-899.

This sequence belongs to the GlnD family. Mg(2+) serves as cofactor.

It catalyses the reaction [protein-PII]-L-tyrosine + UTP = [protein-PII]-uridylyl-L-tyrosine + diphosphate. The catalysed reaction is [protein-PII]-uridylyl-L-tyrosine + H2O = [protein-PII]-L-tyrosine + UMP + H(+). Uridylyltransferase (UTase) activity is inhibited by glutamine, while glutamine activates uridylyl-removing (UR) activity. Its function is as follows. Modifies, by uridylylation and deuridylylation, the PII regulatory proteins (GlnB and homologs), in response to the nitrogen status of the cell that GlnD senses through the glutamine level. Under low glutamine levels, catalyzes the conversion of the PII proteins and UTP to PII-UMP and PPi, while under higher glutamine levels, GlnD hydrolyzes PII-UMP to PII and UMP (deuridylylation). Thus, controls uridylylation state and activity of the PII proteins, and plays an important role in the regulation of nitrogen assimilation and metabolism. This chain is Bifunctional uridylyltransferase/uridylyl-removing enzyme, found in Psychrobacter sp. (strain PRwf-1).